Here is a 60-residue protein sequence, read N- to C-terminus: Cytotoxin 1 (60 aa).

Intrachain disulfides connect Cys3–Cys21, Cys14–Cys38, Cys42–Cys53, and Cys54–Cys59.

The protein belongs to the three-finger toxin family. Short-chain subfamily. Type IA cytotoxin sub-subfamily. In terms of assembly, monomer, or heterodimer with alpha-cobratoxin (AC P01391); disulfide-linked. As to expression, expressed by the venom gland.

Its subcellular location is the secreted. The protein localises to the target cell membrane. Its function is as follows. Monomer: shows cytolytic activity (apoptosis is induced in C2C12 cells, but no cytotoxicity is observed on INS-1E). In addition, this toxin shows insulinotropic activity that may be mediated by the modulation of potassium channels (Kv). It induces the increase of intracellular calcium release. It induces insulin secretion from rat INS-1E cells in absence and in presence of glucose, without affecting cell viability and integrity. In presence of glucose, the insulinotropic activity is increased, suggesting a possible synergistic effect with glucose. Its insulinotropic activity does not involve GLP-1R signaling. In terms of biological role, heterodimer: has no cytolytic activity, but retains most of the alpha-cobratoxin capacity to compete with alpha-bungarotoxin for binding to Torpedo and alpha-7/CHRNA7 nicotinic acetylcholine receptors (nAChRs) as well as to Lymnea stagnalis acetylcholine-binding protein. This Naja kaouthia (Monocled cobra) protein is Cytotoxin 1.